The chain runs to 471 residues: tRNA-2-methylthio-N(6)-dimethylallyladenosine synthase (471 aa).

Residues 31–149 (LYYHIETYGC…FPQLLWEALN (119 aa)) form the MTTase N-terminal domain. Residues C40, C76, C110, C186, C190, and C193 each coordinate [4Fe-4S] cluster. In terms of domain architecture, Radical SAM core spans 172–402 (RDSNLKAWVN…IELQNKISLE (231 aa)). The TRAM domain occupies 405-468 (AELRGKIVEV…AWTMQGELVE (64 aa)).

The protein belongs to the methylthiotransferase family. MiaB subfamily. In terms of assembly, monomer. It depends on [4Fe-4S] cluster as a cofactor.

The protein resides in the cytoplasm. The enzyme catalyses N(6)-dimethylallyladenosine(37) in tRNA + (sulfur carrier)-SH + AH2 + 2 S-adenosyl-L-methionine = 2-methylsulfanyl-N(6)-dimethylallyladenosine(37) in tRNA + (sulfur carrier)-H + 5'-deoxyadenosine + L-methionine + A + S-adenosyl-L-homocysteine + 2 H(+). In terms of biological role, catalyzes the methylthiolation of N6-(dimethylallyl)adenosine (i(6)A), leading to the formation of 2-methylthio-N6-(dimethylallyl)adenosine (ms(2)i(6)A) at position 37 in tRNAs that read codons beginning with uridine. The protein is tRNA-2-methylthio-N(6)-dimethylallyladenosine synthase of Thermoanaerobacter pseudethanolicus (strain ATCC 33223 / 39E) (Clostridium thermohydrosulfuricum).